The primary structure comprises 163 residues: COP9 signalosome complex subunit 9 (163 aa).

One can recognise a PCI domain in the interval 5 to 120 (EVLHAVLDPK…SVGRRIKVLR (116 aa)).

As to quaternary structure, component of a COP9 signalosome-like (CSN) complex.

It localises to the cytoplasm. The protein resides in the nucleus. Component of the COP9 signalosome (CSN) complex that acts as a regulator of the ubiquitin (Ubl) conjugation pathway by mediating the deneddylation of the cullin subunit of SCF-type E3 ubiquitin-protein ligase complexes. The complex is involved in the regulation of the mating pheromone response. This Eremothecium gossypii (strain ATCC 10895 / CBS 109.51 / FGSC 9923 / NRRL Y-1056) (Yeast) protein is COP9 signalosome complex subunit 9 (CSN9).